The chain runs to 368 residues: Homoserine O-acetyltransferase (368 aa).

An AB hydrolase-1 domain is found at Asn-41 to Glu-352. The Nucleophile role is filled by Ser-147. Arg-219 contacts substrate. Residues Asp-313 and His-346 contribute to the active site. A substrate-binding site is contributed by Asp-347.

It belongs to the AB hydrolase superfamily. MetX family. In terms of assembly, homodimer.

The protein resides in the cytoplasm. The catalysed reaction is L-homoserine + acetyl-CoA = O-acetyl-L-homoserine + CoA. It functions in the pathway amino-acid biosynthesis; L-methionine biosynthesis via de novo pathway; O-acetyl-L-homoserine from L-homoserine: step 1/1. Transfers an acetyl group from acetyl-CoA to L-homoserine, forming acetyl-L-homoserine. In Nautilia profundicola (strain ATCC BAA-1463 / DSM 18972 / AmH), this protein is Homoserine O-acetyltransferase.